Consider the following 164-residue polypeptide: Ubiquitin-fold modifier-conjugating enzyme 1 (164 aa).

The active-site Glycyl thioester intermediate is C116.

It belongs to the ubiquitin-conjugating enzyme family. UFC1 subfamily.

Its function is as follows. E2-like enzyme which forms an intermediate with UFM1 via a thioester linkage. The protein is Ubiquitin-fold modifier-conjugating enzyme 1 of Drosophila persimilis (Fruit fly).